Here is a 111-residue protein sequence, read N- to C-terminus: Nucleoid-associated protein PputGB1_3833 (111 aa).

2 disordered regions span residues 1 to 25 (MMKG…KMQE) and 87 to 111 (EQSS…KMPF).

This sequence belongs to the YbaB/EbfC family. As to quaternary structure, homodimer.

Its subcellular location is the cytoplasm. It localises to the nucleoid. Its function is as follows. Binds to DNA and alters its conformation. May be involved in regulation of gene expression, nucleoid organization and DNA protection. The protein is Nucleoid-associated protein PputGB1_3833 of Pseudomonas putida (strain GB-1).